Reading from the N-terminus, the 394-residue chain is Dual-specificity RNA methyltransferase RlmN (394 aa).

Glu116 functions as the Proton acceptor in the catalytic mechanism. Residues 122–365 enclose the Radical SAM core domain; the sequence is EEDRGTLCVS…SPIRTPRGED (244 aa). Cys129 and Cys370 are disulfide-bonded. [4Fe-4S] cluster is bound by residues Cys136, Cys140, and Cys143. S-adenosyl-L-methionine contacts are provided by residues 196–197, Ser228, 250–252, and Asn327; these read GE and SFH. Cys370 acts as the S-methylcysteine intermediate in catalysis.

This sequence belongs to the radical SAM superfamily. RlmN family. The cofactor is [4Fe-4S] cluster.

The protein resides in the cytoplasm. The catalysed reaction is adenosine(2503) in 23S rRNA + 2 reduced [2Fe-2S]-[ferredoxin] + 2 S-adenosyl-L-methionine = 2-methyladenosine(2503) in 23S rRNA + 5'-deoxyadenosine + L-methionine + 2 oxidized [2Fe-2S]-[ferredoxin] + S-adenosyl-L-homocysteine. It catalyses the reaction adenosine(37) in tRNA + 2 reduced [2Fe-2S]-[ferredoxin] + 2 S-adenosyl-L-methionine = 2-methyladenosine(37) in tRNA + 5'-deoxyadenosine + L-methionine + 2 oxidized [2Fe-2S]-[ferredoxin] + S-adenosyl-L-homocysteine. Specifically methylates position 2 of adenine 2503 in 23S rRNA and position 2 of adenine 37 in tRNAs. m2A2503 modification seems to play a crucial role in the proofreading step occurring at the peptidyl transferase center and thus would serve to optimize ribosomal fidelity. This is Dual-specificity RNA methyltransferase RlmN from Dinoroseobacter shibae (strain DSM 16493 / NCIMB 14021 / DFL 12).